Consider the following 649-residue polypeptide: MHVTLPDGKQLDLQPGATALDAAKAIGPRLAQDALGATANGELTDLMTPLSDGASITLITKKNPGDAAPLFRHSLGHVMSQAVGEYYKAKGYGPDAIKRGVGPYIENGWYQDFDLPEPLKEEDLPEIEKIMRDIIGRGLDITRREISKDEALAQFPHDPYKAELIEGLPDDEPITFYSQGDYTDLCRGPHFPSTGKLPQSFKLMSTSGAYWRGNEKNPILQRIYGVAFATQKELDEYLFQLEEAKRRDHRKLGKELELFTIDPLVGKGLPLWLPNGTVLREELTNFMKEQQFQRGYQGVVTPNIGNLDLYRTSGHYPYYSESQFNPIQVDEEEYMLKPMNCPHHVRIYASKPRSYRDLPVRLAEFGTVYRYEQSGELNGLTRVRGFTQDDAHIFCRPDQLKREFLDVLDLTVLVLKTFGMTDVRFRVGVRDPESDKYVGDEQNWALAERQIIEAVEEVGLPYTIEPGDAAFYGPKLDFVVKDVLGREWQLGTIQVDYNLPERFDISYTGEDGQEHRPIMIHRAPFGSIERFTGILIEHYAGDFPLWLAPRQVMIIPIADRHNAYAEELREELHRAGLRAEVDDSSNRMQAKVRDAELHKIPVMLIVGDKEQEAREVSVRERTGEGTKERKGVKFDELKAELLERRKNRS.

Residues 1–60 (MHVTLPDGKQLDLQPGATALDAAKAIGPRLAQDALGATANGELTDLMTPLSDGASITLIT) form the TGS domain. The interval 248-544 (DHRKLGKELE…LIEHYAGDFP (297 aa)) is catalytic. Cys341, His392, and His521 together coordinate Zn(2+).

The protein belongs to the class-II aminoacyl-tRNA synthetase family. As to quaternary structure, homodimer. The cofactor is Zn(2+).

The protein resides in the cytoplasm. It carries out the reaction tRNA(Thr) + L-threonine + ATP = L-threonyl-tRNA(Thr) + AMP + diphosphate + H(+). In terms of biological role, catalyzes the attachment of threonine to tRNA(Thr) in a two-step reaction: L-threonine is first activated by ATP to form Thr-AMP and then transferred to the acceptor end of tRNA(Thr). Also edits incorrectly charged L-seryl-tRNA(Thr). This is Threonine--tRNA ligase from Deinococcus radiodurans (strain ATCC 13939 / DSM 20539 / JCM 16871 / CCUG 27074 / LMG 4051 / NBRC 15346 / NCIMB 9279 / VKM B-1422 / R1).